Consider the following 128-residue polypeptide: Protein ripply2 (128 aa).

The interval 1-63 is disordered; the sequence is MENAGGAEGT…HAAEAMPDGP (63 aa). Residues 9–22 show a composition bias toward low complexity; that stretch reads GTESGAAACAATDG. The WRPW motif motif lies at 37-40; the sequence is WRPW. A ripply homology domain region spans residues 77–112; the sequence is HPVRLFWPKSKCYDYLYQEAEALLKNFPIQATISFY.

It belongs to the ripply family.

The protein resides in the nucleus. Functionally, plays a role in somitogenesis. Required for somite segregation and establishment of rostrocaudal polarity in somites. The protein is Protein ripply2 (RIPPLY2) of Homo sapiens (Human).